The chain runs to 1254 residues: DNA polymerase gamma (1254 aa).

Positions 1125-1137 (RKKENRIDDENKK) are enriched in basic and acidic residues. 2 disordered regions span residues 1125–1145 (RKKENRIDDENKKKLTRKKNT) and 1202–1240 (YKKKPSQARTASSSPIRKTAKAVHSKKLPARKSSTTNRN). Over residues 1208–1217 (QARTASSSPI) the composition is skewed to polar residues. Residues 1219 to 1231 (KTAKAVHSKKLPA) are compositionally biased toward basic residues.

The protein belongs to the DNA polymerase type-A family. Mg(2+) serves as cofactor.

Its subcellular location is the mitochondrion. The enzyme catalyses DNA(n) + a 2'-deoxyribonucleoside 5'-triphosphate = DNA(n+1) + diphosphate. Involved in the replication of mitochondrial DNA. This chain is DNA polymerase gamma (MIP1), found in Saccharomyces cerevisiae (strain ATCC 204508 / S288c) (Baker's yeast).